Consider the following 117-residue polypeptide: Putative membrane protein insertion efficiency factor (117 aa).

It belongs to the UPF0161 family.

The protein resides in the cell inner membrane. Functionally, could be involved in insertion of integral membrane proteins into the membrane. The protein is Putative membrane protein insertion efficiency factor of Bartonella henselae (strain ATCC 49882 / DSM 28221 / CCUG 30454 / Houston 1) (Rochalimaea henselae).